The chain runs to 468 residues: Peripherin (468 aa).

Positions 1-16 (MSHHSSGLRSSISSTS) are enriched in low complexity. Residues 1 to 22 (MSHHSSGLRSSISSTSYRRTFG) are disordered. Residues 1 to 96 (MSHHSSGLRS…FLATRSNEKQ (96 aa)) form a head region. Y17 carries the post-translational modification 3'-nitrotyrosine. 3 positions are modified to phosphoserine: S28, S50, and S59. The region spanning 94–404 (EKQELQELND…KLLEGEESRI (311 aa)) is the IF rod domain. Residues 97–129 (ELQELNDRFANFIEKVRFLEQQNAALRGELSQA) are coil 1A. A linker 1 region spans residues 130–140 (RGQEPARADQL). The tract at residues 141–236 (CQQELRELRR…KLHEEELRDL (96 aa)) is coil 1B. The tract at residues 237 to 259 (QVSVESQQVQQVEVEATVKPELT) is linker 2. Residues 260-402 (AALRDIRAQY…YRKLLEGEES (143 aa)) form a coil 2 region. Residue Y376 is modified to 3'-nitrotyrosine. The interval 403–468 (RISVPVHSFA…ELDKSSIHSY (66 aa)) is tail. The disordered stretch occupies residues 445–468 (GEKVVTESQKEQHSELDKSSIHSY). Position 468 is a phosphotyrosine (Y468).

This sequence belongs to the intermediate filament family. Forms homodimers (in vitro). Homopolymerizes into a filamentous network (in vitro). Forms heterodimers with NEFL, NEFM or NEFH (in vitro). Interacts with DST (via C-terminus). Interacts with RAB7A; the interaction is direct. Interacts with PRKCE (via phorbol-ester/DAG-type 2 domain). Post-translationally, phosphorylated; phosphorylation increases after nerve injury in regenerating neurons. As to expression, expressed in hypoglossal motor neurons (at protein level). Expressed in the small and large sensory neurons of the dorsal root ganglion (at protein level). Expressed in cutaneous and muscular sensory neurons.

Its subcellular location is the cytoplasm. The protein resides in the cytoskeleton. It is found in the cell projection. The protein localises to the axon. It localises to the perikaryon. Its function is as follows. Class-III neuronal intermediate filament protein. My form an independent structural network without the involvement of other neurofilaments or may cooperate with the neuronal intermediate filament proteins NEFL, NEFH, NEFM and INA to form a filamentous network. Assembly of the neuronal intermediate filaments may be regulated by RAB7A. Plays a role in the development of unmyelinated sensory neurons. May be involved in axon elongation and axon regeneration after injury. Inhibits neurite extension in type II spiral ganglion neurons in the cochlea. The protein is Peripherin (Prph) of Rattus norvegicus (Rat).